Reading from the N-terminus, the 644-residue chain is Exoribonuclease 2 (644 aa).

The RNB domain occupies 189–516 (REDLTALNFV…NHRLLKAMIT (328 aa)). The 83-residue stretch at 561-643 (DTRFTAEIID…ETRNVIARPV (83 aa)) folds into the S1 motif domain.

The protein belongs to the RNR ribonuclease family. RNase II subfamily.

The protein resides in the cytoplasm. It carries out the reaction Exonucleolytic cleavage in the 3'- to 5'-direction to yield nucleoside 5'-phosphates.. In terms of biological role, involved in mRNA degradation. Hydrolyzes single-stranded polyribonucleotides processively in the 3' to 5' direction. This chain is Exoribonuclease 2, found in Yersinia pseudotuberculosis serotype IB (strain PB1/+).